The chain runs to 214 residues: Threonylcarbamoyl-AMP synthase (214 aa).

The region spanning Thr9–Arg214 is the YrdC-like domain.

It belongs to the SUA5 family. TsaC subfamily.

The protein localises to the cytoplasm. The catalysed reaction is L-threonine + hydrogencarbonate + ATP = L-threonylcarbamoyladenylate + diphosphate + H2O. Functionally, required for the formation of a threonylcarbamoyl group on adenosine at position 37 (t(6)A37) in tRNAs that read codons beginning with adenine. Catalyzes the conversion of L-threonine, HCO(3)(-)/CO(2) and ATP to give threonylcarbamoyl-AMP (TC-AMP) as the acyladenylate intermediate, with the release of diphosphate. In Psychrobacter cryohalolentis (strain ATCC BAA-1226 / DSM 17306 / VKM B-2378 / K5), this protein is Threonylcarbamoyl-AMP synthase.